The following is a 146-amino-acid chain: VHLTGEEKSTVSALWGKVNVEEIGGEALGRLLVVYPWTQRFFDSFGDLSSPSAVFGNAKVKSHGKKVLDSFSNGMQHLDNLKGTFAKLSELHCDKLHVDPENFRLLGNVLVVVLARNFGKEFTPQVQAAYQKVVAGVATALAHKYH.

Val-1 carries the N-acetylvaline modification. In terms of domain architecture, Globin spans 2-146 (HLTGEEKSTV…VATALAHKYH (145 aa)). Ser-44 carries the post-translational modification Phosphoserine. Lys-59 bears the N6-acetyllysine mark. His-63 lines the heme b pocket. Residue Lys-82 is modified to N6-acetyllysine. His-92 is a heme b binding site. Cys-93 bears the S-nitrosocysteine mark. Lys-144 is subject to N6-acetyllysine.

The protein belongs to the globin family. As to quaternary structure, heterotetramer of two alpha chains and two beta chains. Red blood cells.

In terms of biological role, involved in oxygen transport from the lung to the various peripheral tissues. The polypeptide is Hemoglobin subunit beta (HBB) (Macrotus californicus (Californian leaf-nosed bat)).